The following is a 551-amino-acid chain: Colicin-E6 (551 aa).

5 disordered regions span residues 1 to 74 (MSGG…SGGG), 244 to 269 (LSPG…NTRD), 293 to 317 (PDQV…HPVE), 406 to 501 (NKQA…WYGD), and 517 to 551 (EGYR…KKYL). Residues 20-35 (INGGPTGLGVGGGASD) are compositionally biased toward gly residues. The segment covering 36 to 45 (GSGWSSENNP) has biased composition (low complexity). Over residues 46 to 74 (WGGGSGSGIHWGGGSGHGNGGGNGNSGGG) the composition is skewed to gly residues. Basic and acidic residues-rich tracts occupy residues 296–317 (VKQR…HPVE) and 430–484 (ESRK…EGKP). The ribosome inactivating activity stretch occupies residues 455 to 551 (KGVKDYGHDY…DPKRNIKKYL (97 aa)). Positions 530 to 551 (FEPKTGNQLKGPDPKRNIKKYL) are binding of immunity protein.

The protein belongs to the cloacin colicin family.

Inactivates ribosomes by hydrolyzing 16S RNA in 30S ribosomes at a specific site. Its function is as follows. Colicins are polypeptide toxins produced by and active against E.coli and closely related bacteria. This chain is Colicin-E6, found in Escherichia coli.